The following is a 176-amino-acid chain: O-acetyl-ADP-ribose deacetylase (176 aa).

One can recognise a Macro domain in the interval methionine 1–aspartate 175. Substrate is bound by residues aspartate 11 to isoleucine 12, asparagine 25, glycine 33 to aspartate 35, and serine 122 to tyrosine 126. Aspartate 35 serves as the catalytic Proton acceptor.

This sequence belongs to the MacroD-type family. YmdB subfamily. Homodimer. Interacts with RNase III.

It carries out the reaction 3''-O-acetyl-ADP-D-ribose + H2O = ADP-D-ribose + acetate + H(+). The catalysed reaction is 2''-O-acetyl-ADP-D-ribose + H2O = ADP-D-ribose + acetate + H(+). Functionally, deacetylates O-acetyl-ADP ribose to yield ADP-ribose and free acetate. Down-regulates ribonuclease 3 (RNase III) activity. Acts by interacting directly with the region of the ribonuclease that is required for dimerization/activation. This is O-acetyl-ADP-ribose deacetylase from Cronobacter turicensis (strain DSM 18703 / CCUG 55852 / LMG 23827 / z3032).